A 130-amino-acid polypeptide reads, in one-letter code: uncharacterized protein (130 aa).

This is an uncharacterized protein from Aedes vexans (Inland floodwater mosquito).